A 538-amino-acid chain; its full sequence is Phosphoenolpyruvate carboxykinase (ATP) (538 aa).

Substrate contacts are provided by arginine 64, tyrosine 206, and lysine 212. ATP contacts are provided by residues lysine 212, histidine 231, and 247 to 255 (GLSGTGKTT). The Mn(2+) site is built by lysine 212 and histidine 231. Mn(2+) is bound at residue aspartate 268. Residues glutamate 296, arginine 332, 448 to 449 (RI), and threonine 454 contribute to the ATP site. Arginine 332 serves as a coordination point for substrate.

The protein belongs to the phosphoenolpyruvate carboxykinase (ATP) family. In terms of assembly, monomer. It depends on Mn(2+) as a cofactor.

The protein localises to the cytoplasm. It carries out the reaction oxaloacetate + ATP = phosphoenolpyruvate + ADP + CO2. It participates in carbohydrate biosynthesis; gluconeogenesis. Functionally, involved in the gluconeogenesis. Catalyzes the conversion of oxaloacetate (OAA) to phosphoenolpyruvate (PEP) through direct phosphoryl transfer between the nucleoside triphosphate and OAA. This chain is Phosphoenolpyruvate carboxykinase (ATP), found in Enterobacter sp. (strain 638).